A 370-amino-acid chain; its full sequence is 3,7-dimethylxanthine N-methyltransferase CkTbS (370 aa).

Y24 is a binding site for S-adenosyl-L-homocysteine. Theobromine is bound at residue T31. S-adenosyl-L-homocysteine contacts are provided by C67, N72, D104, L105, S139, and F140. Residues Y157, H160, and W161 each coordinate theobromine. Residue N178 coordinates Mg(2+). H226 is a theobromine binding site. Mg(2+) is bound by residues D264, F266, and N267. F322 serves as a coordination point for theobromine.

Belongs to the methyltransferase superfamily. Type-7 methyltransferase family. Mg(2+) is required as a cofactor.

It carries out the reaction 7-methylxanthine + S-adenosyl-L-methionine = theobromine + S-adenosyl-L-homocysteine + H(+). It participates in alkaloid biosynthesis. Involved in the biosynthesis of caffeine in cv. Puer. Involved in the biosynthesis of theacrine in cv. Kucha, a caffeine-like xanthine alkaloid with diverse beneficial biological activities including anti-depressive, sedative, and hypnotic activities, improving learning and memory, increasing exercise activity, and preventing nonalcoholic fatty liver disease. Catalyzes the conversion of 7-methylxanthine (7mX) to theobromine but not able to convert paraxanthine to caffeine. The sequence is that of 3,7-dimethylxanthine N-methyltransferase CkTbS from Camellia sinensis var. assamica (Assam tea).